The primary structure comprises 301 residues: Ribonuclease Z (301 aa).

Zn(2+) is bound by residues H63, H65, D67, H68, H141, D204, and H262. Residue D67 is the Proton acceptor of the active site.

The protein belongs to the RNase Z family. Homodimer. The cofactor is Zn(2+).

The enzyme catalyses Endonucleolytic cleavage of RNA, removing extra 3' nucleotides from tRNA precursor, generating 3' termini of tRNAs. A 3'-hydroxy group is left at the tRNA terminus and a 5'-phosphoryl group is left at the trailer molecule.. In terms of biological role, zinc phosphodiesterase, which displays some tRNA 3'-processing endonuclease activity. Probably involved in tRNA maturation, by removing a 3'-trailer from precursor tRNA. This chain is Ribonuclease Z, found in Streptomyces avermitilis (strain ATCC 31267 / DSM 46492 / JCM 5070 / NBRC 14893 / NCIMB 12804 / NRRL 8165 / MA-4680).